We begin with the raw amino-acid sequence, 237 residues long: dTDP-3-amino-3,4,6-trideoxy-alpha-D-glucopyranose N,N-dimethyltransferase (237 aa).

Residues Tyr14 and Arg17 each coordinate substrate. S-adenosyl-L-methionine is bound by residues Tyr21, Ala46, Glu67, 89-90 (DM), and Met105. Substrate-binding positions include 145–147 (TFA), Ser152, 165–169 (RVSHS), and Arg229.

The protein belongs to the methyltransferase TylM1/DesVI family. In terms of assembly, homodimer.

The catalysed reaction is dTDP-3-amino-3,4,6-trideoxy-alpha-D-glucose + 2 S-adenosyl-L-methionine = dTDP-alpha-D-desosamine + 2 S-adenosyl-L-homocysteine + 2 H(+). It functions in the pathway antibiotic biosynthesis. Functionally, S-adenosyl-L-methionine-dependent methyltransferase involved in the biosynthesis of desosamine, found in certain macrolide antibiotics such as erthyromycin, azithromycin, clarithromycin, and methymycin. Catalyzes the last step in the biosynthesis of dTDP-desosamine, i.e. the N,N-dimethylation of the 3-amino group of dTDP-3-amino-3,4,6-trideoxy-alpha-D-glucose. The protein is dTDP-3-amino-3,4,6-trideoxy-alpha-D-glucopyranose N,N-dimethyltransferase of Streptomyces venezuelae.